Reading from the N-terminus, the 74-residue chain is Spore germination protein GerE (74 aa).

Residues 5–70 (EFQSKPLLTK…QAVVELLRMG (66 aa)) enclose the HTH luxR-type domain. A DNA-binding region (H-T-H motif) is located at residues 29–48 (TKEIASELFISEKTVRNHIS).

In terms of biological role, involved in the regulation of spore formation. Directs the transcription of several genes that encode structural components of the protein coat that encases the mature spore (CotB, CotC, CotG, CotS, CotV, CotW, CotX, CotY and CotZ). Also controls the cgeAB and cgeCDE operons. The protein is Spore germination protein GerE (gerE) of Bacillus subtilis (strain 168).